Here is a 197-residue protein sequence, read N- to C-terminus: Signal peptidase complex catalytic subunit SEC11 (197 aa).

Over 1–14 the chain is Cytoplasmic; it reads MLSSLAPYMANPRQ. The helical; Signal-anchor for type II membrane protein transmembrane segment at 15–33 threads the bilayer; the sequence is TLTQVLNFALVLSTAFMLW. Topologically, residues 34–197 are lumenal; the sequence is KGLSVITNST…MGLMVVLQRE (164 aa). N-linked (GlcNAc...) asparagine glycosylation is present at asparagine 41. Active-site charge relay system residues include serine 53 and histidine 92. The segment covering 102-115 has biased composition (basic and acidic residues); it reads PGREDKKNVKKGGE. The disordered stretch occupies residues 102–134; that stretch reads PGREDKKNVKKGGEEGEETSSTPSQKLLTKGDN. Aspartate 139 serves as the catalytic Charge relay system. The C-terminal short (CTS) helix stretch occupies residues 183-194; the sequence is VLLGFMGLMVVL.

The protein belongs to the peptidase S26B family. As to quaternary structure, component of the signal peptidase complex (SPC) composed of a catalytic subunit SEC11 and three accessory subunits SPC1, SPC2 and SPC3. The complex induces a local thinning of the ER membrane which is used to measure the length of the signal peptide (SP) h-region of protein substrates. This ensures the selectivity of the complex towards h-regions shorter than 18-20 amino acids. SPC associates with the translocon complex.

It localises to the endoplasmic reticulum membrane. The catalysed reaction is Cleavage of hydrophobic, N-terminal signal or leader sequences from secreted and periplasmic proteins.. In terms of biological role, catalytic component of the signal peptidase complex (SPC) which catalyzes the cleavage of N-terminal signal sequences from nascent proteins as they are translocated into the lumen of the endoplasmic reticulum. Specifically cleaves N-terminal signal peptides that contain a hydrophobic alpha-helix (h-region) shorter than 18-20 amino acids. The sequence is that of Signal peptidase complex catalytic subunit SEC11 (SEC11) from Paracoccidioides brasiliensis (strain Pb18).